We begin with the raw amino-acid sequence, 446 residues long: MTVVAIVGRPNVGKSTLFNRISKDNSALVDDLPGVTRDRNYARVSWNDKPFVIIDTAGFVGQDTSAFEELTREQILLALDEADILLFVADAKTGLHPGDAELADLLRRSSKPVFYAVNKIDGSEQRRHAAEFFELGLDRIYPISAAHGFGISELMDDLCAAIPEAPAQTAEEEESGGAIRVSILGRPNVGKSTLVNHLLGAPRVIVSPVPGTTRDAVDSHIVKAGQEYVLIDTAGIRRKGRTREKLEKISIIKALQSVERSHVVVLLLDAVEGVTDQDLHIAGYIKERSRACIVGINKWDAADKDPKRTKRFMDDLHDRFRFLTYAPVLTFSALTGRNVARLLPTVKEVFRQYNQRVTTGIVNRALEETLARHEPPQAGNRRRLKFYYATQTAVRPPTFVLFCNYPQAIHFSYERYLTNRFREAFGLDKTPIRLIFRPRQRTGGTS.

EngA-type G domains follow at residues 2-166 and 179-354; these read TVVA…PEAP and IRVS…RQYN. Residues 8-15, 55-59, 118-121, 185-192, 232-236, and 297-300 each bind GTP; these read GRPNVGKS, DTAGF, NKID, DTAGI, and NKWD. The KH-like domain occupies 355 to 440; the sequence is QRVTTGIVNR…PIRLIFRPRQ (86 aa).

It belongs to the TRAFAC class TrmE-Era-EngA-EngB-Septin-like GTPase superfamily. EngA (Der) GTPase family. As to quaternary structure, associates with the 50S ribosomal subunit.

Functionally, GTPase that plays an essential role in the late steps of ribosome biogenesis. In Syntrophobacter fumaroxidans (strain DSM 10017 / MPOB), this protein is GTPase Der.